We begin with the raw amino-acid sequence, 446 residues long: tRNA modification GTPase MnmE (446 aa).

(6S)-5-formyl-5,6,7,8-tetrahydrofolate is bound by residues R24, E81, and K120. In terms of domain architecture, TrmE-type G spans 216–368 (GLHAVLIGPP…LHTRLRELAL (153 aa)). N226 lines the K(+) pocket. GTP-binding positions include 226–231 (NAGKSS), 245–251 (TDVAGTT), and 270–273 (DTAG). S230 lines the Mg(2+) pocket. 3 residues coordinate K(+): T245, V247, and T250. T251 lines the Mg(2+) pocket. Residue K446 coordinates (6S)-5-formyl-5,6,7,8-tetrahydrofolate.

Belongs to the TRAFAC class TrmE-Era-EngA-EngB-Septin-like GTPase superfamily. TrmE GTPase family. In terms of assembly, homodimer. Heterotetramer of two MnmE and two MnmG subunits. K(+) serves as cofactor.

The protein localises to the cytoplasm. In terms of biological role, exhibits a very high intrinsic GTPase hydrolysis rate. Involved in the addition of a carboxymethylaminomethyl (cmnm) group at the wobble position (U34) of certain tRNAs, forming tRNA-cmnm(5)s(2)U34. This is tRNA modification GTPase MnmE from Xanthomonas campestris pv. campestris (strain 8004).